Consider the following 968-residue polypeptide: RNA polymerase-associated protein RapA (968 aa).

Residues 164–334 (EVGQRHAPRV…FARLRLLDPD (171 aa)) enclose the Helicase ATP-binding domain. 177–184 (DEVGLGKT) contributes to the ATP binding site. The DEAH box motif lies at 280 to 283 (DEAH). The Helicase C-terminal domain occupies 490-644 (RVEWLLNYLV…TCPTGRTIYD (155 aa)).

It belongs to the SNF2/RAD54 helicase family. RapA subfamily. Interacts with the RNAP. Has a higher affinity for the core RNAP than for the holoenzyme. Its ATPase activity is stimulated by binding to RNAP.

Functionally, transcription regulator that activates transcription by stimulating RNA polymerase (RNAP) recycling in case of stress conditions such as supercoiled DNA or high salt concentrations. Probably acts by releasing the RNAP, when it is trapped or immobilized on tightly supercoiled DNA. Does not activate transcription on linear DNA. Probably not involved in DNA repair. This Yersinia pestis bv. Antiqua (strain Antiqua) protein is RNA polymerase-associated protein RapA.